The chain runs to 491 residues: UDP-N-acetylmuramate--L-alanine ligase (491 aa).

126 to 132 is a binding site for ATP; that stretch reads GTHGKTT.

The protein belongs to the MurCDEF family.

The protein resides in the cytoplasm. It catalyses the reaction UDP-N-acetyl-alpha-D-muramate + L-alanine + ATP = UDP-N-acetyl-alpha-D-muramoyl-L-alanine + ADP + phosphate + H(+). It participates in cell wall biogenesis; peptidoglycan biosynthesis. Its function is as follows. Cell wall formation. The protein is UDP-N-acetylmuramate--L-alanine ligase of Salmonella arizonae (strain ATCC BAA-731 / CDC346-86 / RSK2980).